The following is a 981-amino-acid chain: Ephrin type-A receptor 3 (981 aa).

An N-terminal signal peptide occupies residues 1–20 (MALFRIYSFLAPFHILVLCQ). The Extracellular segment spans residues 21-545 (ALRNYPDNEV…LAVGDPNQQT (525 aa)). The region spanning 29 to 210 (EVTLLDSMSA…FYKRCPLAVL (182 aa)) is the Eph LBD domain. Fibronectin type-III domains lie at 328 to 441 (PPSA…TSQT) and 442 to 533 (VSVI…TSHE). N-linked (GlcNAc...) asparagine glycosylation is found at Asn-340, Asn-410, Asn-435, and Asn-485. A helical transmembrane segment spans residues 546-566 (ILAISVAGGAVLLVLLVACFI). Over 567–981 (VSGRRCGYIK…QAHHGTQVQV (415 aa)) the chain is Cytoplasmic. Residues Tyr-601 and Tyr-607 each carry the phosphotyrosine; by autocatalysis modification. The Protein kinase domain occupies 626–887 (IRIERVIGAG…QIVNTLDRLI (262 aa)). ATP is bound by residues 633 to 638 (GAGEFG), Lys-658, and 705 to 711 (EYMENGS). The residue at position 706 (Tyr-706) is a Phosphotyrosine; by autocatalysis. The active-site Proton acceptor is Asp-751. 755–756 (RN) contributes to the ATP binding site. Tyr-784 and Tyr-927 each carry phosphotyrosine; by autocatalysis. Residues 910–974 (AAVNTVEDWL…LSSIQCLQAH (65 aa)) form the SAM domain. A PDZ-binding motif is present at residues 979–981 (VQV).

It belongs to the protein kinase superfamily. Tyr protein kinase family. Ephrin receptor subfamily. Heterotetramer upon binding of the ligand. The heterotetramer is composed of an ephrin dimer and a receptor dimer. Oligomerization is probably required to induce biological responses. Autophosphorylates upon activation by efna5. In terms of tissue distribution, widely expressed in the developing zebrafish nervous system.

Its subcellular location is the cell membrane. The catalysed reaction is L-tyrosyl-[protein] + ATP = O-phospho-L-tyrosyl-[protein] + ADP + H(+). Functionally, receptor tyrosine kinase which binds promiscuously membrane-bound ephrin family ligands residing on adjacent cells, leading to contact-dependent bidirectional signaling into neighboring cells. The signaling pathway downstream of the receptor is referred to as forward signaling while the signaling pathway downstream of the ephrin ligand is referred to as reverse signaling. Highly promiscuous for ephrin-A ligands it binds preferentially efna5. Upon activation by efna5 regulates cell-cell adhesion, cytoskeletal organization and cell migration. Plays a role in cardiac cells migration and differentiation probably through activation by efna1. Involved in the retinotectal mapping of neurons. May also control the segregation but not the guidance of motor and sensory axons during neuromuscular circuit development. The polypeptide is Ephrin type-A receptor 3 (epha3) (Danio rerio (Zebrafish)).